Consider the following 153-residue polypeptide: UPF0756 membrane protein Bcer98_3279 (153 aa).

Transmembrane regions (helical) follow at residues 8 to 28, 54 to 74, 87 to 107, and 117 to 137; these read FLFI…IVAI, LGVT…EIGF, WIAL…LQLL, and LVFG…GPLI.

It belongs to the UPF0756 family.

The protein resides in the cell membrane. The polypeptide is UPF0756 membrane protein Bcer98_3279 (Bacillus cytotoxicus (strain DSM 22905 / CIP 110041 / 391-98 / NVH 391-98)).